Reading from the N-terminus, the 404-residue chain is Propionate kinase PduW (404 aa).

This sequence belongs to the acetokinase family. PduW subfamily.

The protein resides in the cytoplasm. The catalysed reaction is propanoate + ATP = propanoyl phosphate + ADP. Its pathway is polyol metabolism; 1,2-propanediol degradation. It participates in organic acid metabolism; propanoate degradation. Works with phosphate acetyltransferase (pta) to capture exogenous propionate and regenerate propionyl-CoA during degradation of propionate and 1,2-propanediol (1,2-PD). Ectopic expression partially complements a cobB deletion allowing some growth on propionate. Restores growth to an eutQ deletion on ethanolamine and tetrathionate under anoxic conditions. This chain is Propionate kinase PduW, found in Salmonella typhimurium (strain LT2 / SGSC1412 / ATCC 700720).